A 163-amino-acid chain; its full sequence is ATP synthase subunit b 1 (163 aa).

Residues 6 to 26 (LAELWVAVAFLLFVGILIYVG) form a helical membrane-spanning segment.

Belongs to the ATPase B chain family. In terms of assembly, F-type ATPases have 2 components, F(1) - the catalytic core - and F(0) - the membrane proton channel. F(1) has five subunits: alpha(3), beta(3), gamma(1), delta(1), epsilon(1). F(0) has three main subunits: a(1), b(2) and c(10-14). The alpha and beta chains form an alternating ring which encloses part of the gamma chain. F(1) is attached to F(0) by a central stalk formed by the gamma and epsilon chains, while a peripheral stalk is formed by the delta and b chains.

The protein resides in the cell inner membrane. In terms of biological role, f(1)F(0) ATP synthase produces ATP from ADP in the presence of a proton or sodium gradient. F-type ATPases consist of two structural domains, F(1) containing the extramembraneous catalytic core and F(0) containing the membrane proton channel, linked together by a central stalk and a peripheral stalk. During catalysis, ATP synthesis in the catalytic domain of F(1) is coupled via a rotary mechanism of the central stalk subunits to proton translocation. Component of the F(0) channel, it forms part of the peripheral stalk, linking F(1) to F(0). The sequence is that of ATP synthase subunit b 1 from Xanthobacter autotrophicus (strain ATCC BAA-1158 / Py2).